Here is a 250-residue protein sequence, read N- to C-terminus: Ubiquinone/menaquinone biosynthesis C-methyltransferase UbiE (250 aa).

S-adenosyl-L-methionine-binding positions include Thr-74, Asp-94, 122 to 123 (DA), and Ser-139.

Belongs to the class I-like SAM-binding methyltransferase superfamily. MenG/UbiE family.

The catalysed reaction is a 2-demethylmenaquinol + S-adenosyl-L-methionine = a menaquinol + S-adenosyl-L-homocysteine + H(+). It carries out the reaction a 2-methoxy-6-(all-trans-polyprenyl)benzene-1,4-diol + S-adenosyl-L-methionine = a 5-methoxy-2-methyl-3-(all-trans-polyprenyl)benzene-1,4-diol + S-adenosyl-L-homocysteine + H(+). The protein operates within quinol/quinone metabolism; menaquinone biosynthesis; menaquinol from 1,4-dihydroxy-2-naphthoate: step 2/2. It participates in cofactor biosynthesis; ubiquinone biosynthesis. Methyltransferase required for the conversion of demethylmenaquinol (DMKH2) to menaquinol (MKH2) and the conversion of 2-polyprenyl-6-methoxy-1,4-benzoquinol (DDMQH2) to 2-polyprenyl-3-methyl-6-methoxy-1,4-benzoquinol (DMQH2). The protein is Ubiquinone/menaquinone biosynthesis C-methyltransferase UbiE of Cereibacter sphaeroides (strain ATCC 17029 / ATH 2.4.9) (Rhodobacter sphaeroides).